The chain runs to 143 residues: MLENKMELKFLAKSENESFARVTVASFASELDPTLEEIDDVKMAVSEAVTNAIIHGYENKGGVVTICAVIEDRELTIEVMDEGIGIENIEKAMEPLYTSRPDLERSGMGFTVMESFMDNIKVESEKGKGTKIIMKKKFALIED.

The protein belongs to the anti-sigma-factor family.

The catalysed reaction is L-seryl-[protein] + ATP = O-phospho-L-seryl-[protein] + ADP + H(+). It catalyses the reaction L-threonyl-[protein] + ATP = O-phospho-L-threonyl-[protein] + ADP + H(+). Functionally, binds to sigma F and blocks its ability to form an RNA polymerase holoenzyme (E-sigma F). Phosphorylates SpoIIAA on a serine residue. This phosphorylation may enable SpoIIAA to act as an anti-anti-sigma factor that counteracts SpoIIAB and thus releases sigma F from inhibition. The chain is Anti-sigma F factor from Clostridium acetobutylicum (strain ATCC 824 / DSM 792 / JCM 1419 / IAM 19013 / LMG 5710 / NBRC 13948 / NRRL B-527 / VKM B-1787 / 2291 / W).